A 316-amino-acid chain; its full sequence is Transaldolase 2 (316 aa).

Catalysis depends on Lys131, which acts as the Schiff-base intermediate with substrate.

It belongs to the transaldolase family. Type 1 subfamily. In terms of assembly, homodimer.

It is found in the cytoplasm. The enzyme catalyses D-sedoheptulose 7-phosphate + D-glyceraldehyde 3-phosphate = D-erythrose 4-phosphate + beta-D-fructose 6-phosphate. It participates in carbohydrate degradation; pentose phosphate pathway; D-glyceraldehyde 3-phosphate and beta-D-fructose 6-phosphate from D-ribose 5-phosphate and D-xylulose 5-phosphate (non-oxidative stage): step 2/3. Functionally, transaldolase is important for the balance of metabolites in the pentose-phosphate pathway. This Salmonella paratyphi A (strain ATCC 9150 / SARB42) protein is Transaldolase 2.